The chain runs to 661 residues: Pumilio domain-containing protein C56F2.08c (661 aa).

The region spanning 1–74 (MLYVSNLPVG…GPVQVMLAKP (74 aa)) is the RRM domain. Position 102 is a phosphoserine (Ser-102). Position 104 is a phosphothreonine (Thr-104). Residue Ser-105 is modified to Phosphoserine. Residues 129 to 482 (INLDIVDSMI…RLMEEVGMTS (354 aa)) form the PUM-HD domain. Pumilio repeat units follow at residues 191–226 (SMLD…AMLE), 227–263 (RIAP…LIVK), 264–302 (HLRP…VMAR), and 374–410 (HLAT…LLLK). Ser-482, Ser-486, Ser-488, and Ser-490 each carry phosphoserine.

It localises to the cytoplasm. In Schizosaccharomyces pombe (strain 972 / ATCC 24843) (Fission yeast), this protein is Pumilio domain-containing protein C56F2.08c.